Here is a 593-residue protein sequence, read N- to C-terminus: Zinc metalloproteinase-disintegrin-like atrase-B (593 aa).

An N-terminal signal peptide occupies residues 1-20; the sequence is MIQALLVIICLAVFPHQGSS. Residues 21–191 constitute a propeptide that is removed on maturation; the sequence is IILESGNVND…DESIEKTSQL (171 aa). The Peptidase M12B domain maps to 205-400; sequence KYIEFYVIVD…DRPQCILNKP (196 aa). Ca(2+) is bound by residues E208 and D292. 3 disulfide bridges follow: C316-C395, C356-C379, and C358-C363. Residue N319 is glycosylated (N-linked (GlcNAc...) asparagine). H341 contributes to the Zn(2+) binding site. E342 is a catalytic residue. 2 residues coordinate Zn(2+): H345 and H351. Ca(2+)-binding residues include C395, N398, I410, N413, F415, E417, E420, and D423. One can recognise a Disintegrin domain in the interval 408-477; it reads PPICGNYFVE…ECPTDSLQRN (70 aa). 11 disulfides stabilise this stretch: C422-C435, C424-C430, C434-C440, C449-C469, C456-C488, C481-C493, C500-C550, C515-C558, C528-C538, C545-C581, and C575-C586. Positions 455–457 match the D/ECD-tripeptide motif; the sequence is DCD. Ca(2+)-binding residues include D457, L458, E460, and D472. N-linked (GlcNAc...) asparagine glycosylation is present at N490.

Belongs to the venom metalloproteinase (M12B) family. P-III subfamily. P-IIIa sub-subfamily. Monomer. Zn(2+) serves as cofactor. As to expression, expressed by the venom gland.

Its subcellular location is the secreted. With respect to regulation, inhibited by EDTA, EGTA, 1,10-phenanthroline and DTT. Not inhibited by PMSF and SBTI. Its function is as follows. Snake venom zinc protease that inhibits the classical and alternative pathways of complement by cleaving factor B, C6, C7, and C8. Also slowly and selectively degrades alpha-chain of fibrinogen (FGA), and shows edema-inducing activity. This chain is Zinc metalloproteinase-disintegrin-like atrase-B, found in Naja atra (Chinese cobra).